The chain runs to 447 residues: Putative branched-chain amino acid carrier protein SSP1343 (447 aa).

The next 12 membrane-spanning stretches (helical) occupy residues 6–26 (WIIGFTLFAMFFGAGNLIFPP), 40–60 (ILAFALTGIGLPLLGVIVGAL), 74–94 (PKFSIIFLIIIYLTIGPLFAI), 116–136 (LALFIFTVIYFLIVLYLCINP), 143–163 (IGSLLTPLLLITILAMIVKGF), 192–212 (GYLTMDAIAAIAFSMIVVNAV), 228–248 (LMAGIIAAVALMFIYISLGYI), 289–309 (LLGIIVALACLTTACGLVVAV), 324–344 (IYVIIFTLISFILANQGLNSV), 349–369 (VPVLSIVYPIAITSVLLILLA), 381–401 (IPVAIVSIVSILSMIHTQGWI), and 416–436 (LEWFPIAIVTTIIGYIVAAMV).

This sequence belongs to the branched chain amino acid transporter family.

Its subcellular location is the cell membrane. In terms of biological role, component of the transport system for branched-chain amino acids (leucine, isoleucine and valine), which is coupled to a proton motive force. The polypeptide is Putative branched-chain amino acid carrier protein SSP1343 (Staphylococcus saprophyticus subsp. saprophyticus (strain ATCC 15305 / DSM 20229 / NCIMB 8711 / NCTC 7292 / S-41)).